Consider the following 217-residue polypeptide: Peroxiredoxin (217 aa).

One can recognise a Thioredoxin domain in the interval 2–159; it reads PVIGEKFPEV…IVRLVKALQV (158 aa). Catalysis depends on Cys46, which acts as the Cysteine sulfenic acid (-SOH) intermediate. Residue Arg122 participates in substrate binding. Cysteines 206 and 212 form a disulfide.

It belongs to the peroxiredoxin family. Prx6 subfamily. Homodecamer. Pentamer of dimers that assemble into a ring structure.

Its subcellular location is the cytoplasm. The enzyme catalyses a hydroperoxide + [thioredoxin]-dithiol = an alcohol + [thioredoxin]-disulfide + H2O. In terms of biological role, thiol-specific peroxidase that catalyzes the reduction of hydrogen peroxide and organic hydroperoxides to water and alcohols, respectively. Plays a role in cell protection against oxidative stress by detoxifying peroxides. This Methanocaldococcus jannaschii (strain ATCC 43067 / DSM 2661 / JAL-1 / JCM 10045 / NBRC 100440) (Methanococcus jannaschii) protein is Peroxiredoxin.